Here is a 505-residue protein sequence, read N- to C-terminus: MTTFTKLSEQETPSIAVHASRRISKINPNIYAGFTEHMGRCIYGGIYDPGNPLSDENGFRKDVLEALKELNIPVVRYPGGNFMATYHWIDGVGPKDQRPSRPELAWLGTETNQFGTDEFMKWCELLGTEPYFCLNFGTGTLDEALAWVEYCNGTRDTYYANLRRKNGREEPYNIKYWALGNEVWGPWQVAQTTKEEYAHKAYQWAKALKLLDPTLKLILCGQDGTASWDYYTLKHCILPVNSPLSTSAVPLIDMHSIHLYTSSSSHLPNVTAPLAAERAIEITSSLIDLAMIENGVPNTQLRPTICFDEWNVWDPIRAEGSKGAEESYTLSDALAVAVWLNVFVRKSKDVGMACIAQTVNVISPLMTTKDGIIKQTTWWPLYLFSKYMRGWTINTHVSCGTYEGETAPSWVRTVKDTPWLDVSATLGEDGYVNVAVVNISEDKDIESKFEGAAGEVAVFTVNGDSVSACNMNGKQEVGVTESTWDGKGAYAFPKHSLTLLRWKAE.

Asn152, Asn269, and Asn438 each carry an N-linked (GlcNAc...) asparagine glycan.

Belongs to the glycosyl hydrolase 51 family.

It localises to the secreted. It catalyses the reaction Hydrolysis of terminal non-reducing alpha-L-arabinofuranoside residues in alpha-L-arabinosides.. Its pathway is glycan metabolism; L-arabinan degradation. In terms of biological role, alpha-L-arabinofuranosidase involved in the degradation of arabinoxylan, a major component of plant hemicellulose. Acts only on small linear 1,5-alpha-linked L-arabinofuranosyl oligosaccharides. The polypeptide is Probable alpha-L-arabinofuranosidase C (abfC) (Aspergillus clavatus (strain ATCC 1007 / CBS 513.65 / DSM 816 / NCTC 3887 / NRRL 1 / QM 1276 / 107)).